Consider the following 369-residue polypeptide: 4-hydroxy-3-methylbut-2-en-1-yl diphosphate synthase (flavodoxin) (369 aa).

[4Fe-4S] cluster is bound by residues cysteine 270, cysteine 273, cysteine 305, and glutamate 312.

This sequence belongs to the IspG family. It depends on [4Fe-4S] cluster as a cofactor.

The catalysed reaction is (2E)-4-hydroxy-3-methylbut-2-enyl diphosphate + oxidized [flavodoxin] + H2O + 2 H(+) = 2-C-methyl-D-erythritol 2,4-cyclic diphosphate + reduced [flavodoxin]. The protein operates within isoprenoid biosynthesis; isopentenyl diphosphate biosynthesis via DXP pathway; isopentenyl diphosphate from 1-deoxy-D-xylulose 5-phosphate: step 5/6. Functionally, converts 2C-methyl-D-erythritol 2,4-cyclodiphosphate (ME-2,4cPP) into 1-hydroxy-2-methyl-2-(E)-butenyl 4-diphosphate. In Pseudomonas putida (strain W619), this protein is 4-hydroxy-3-methylbut-2-en-1-yl diphosphate synthase (flavodoxin).